Reading from the N-terminus, the 643-residue chain is Threonine--tRNA ligase (643 aa).

Residues 1–61 form the TGS domain; the sequence is MPIITLPDGS…TEDSTLEIIT (61 aa). Residues 243–534 are catalytic; that stretch reads DHRKIGKALD…ITEEYAGFFP (292 aa). Zn(2+)-binding residues include C334, H385, and H511.

The protein belongs to the class-II aminoacyl-tRNA synthetase family. As to quaternary structure, homodimer. Zn(2+) is required as a cofactor.

It is found in the cytoplasm. The enzyme catalyses tRNA(Thr) + L-threonine + ATP = L-threonyl-tRNA(Thr) + AMP + diphosphate + H(+). In terms of biological role, catalyzes the attachment of threonine to tRNA(Thr) in a two-step reaction: L-threonine is first activated by ATP to form Thr-AMP and then transferred to the acceptor end of tRNA(Thr). Also edits incorrectly charged L-seryl-tRNA(Thr). The sequence is that of Threonine--tRNA ligase from Mannheimia succiniciproducens (strain KCTC 0769BP / MBEL55E).